The sequence spans 561 residues: Zinc finger protein 394 (561 aa).

A disordered region spans residues 1–61; the sequence is MNSSLTAQRR…NYPAASPDPE (61 aa). A Phosphoserine modification is found at S12. K40 participates in a covalent cross-link: Glycyl lysine isopeptide (Lys-Gly) (interchain with G-Cter in SUMO2). Positions 64-146 constitute an SCAN box domain; it reads RLHFRQLRYQ…AVVRALQRAL (83 aa). The KRAB domain maps to 155–230; sequence VTFEDTAVSL…LQEAFQGKRP (76 aa). Residues 182-201 are disordered; sequence ESAQKDSGSTVPPSLESRVE. Glycyl lysine isopeptide (Lys-Gly) (interchain with G-Cter in SUMO2) cross-links involve residues K203 and K228. The interval 231-285 is disordered; it reads LFSKCGSTHEDRVEKQSGDPLPLKLENSPEAEGLNSISDVNKNGSIEGEDSKNNE. The segment covering 237 to 247 has biased composition (basic and acidic residues); it reads STHEDRVEKQS. Residue K254 forms a Glycyl lysine isopeptide (Lys-Gly) (interchain with G-Cter in SUMO2) linkage. Residues 265-274 are compositionally biased toward polar residues; sequence NSISDVNKNG. A Glycyl lysine isopeptide (Lys-Gly) (interchain with G-Cter in SUMO2) cross-link involves residue K282. 7 consecutive C2H2-type zinc fingers follow at residues 358-380, 386-408, 414-436, 442-463, 469-491, 497-519, and 525-547; these read YKCGNCGKSFKQRSDLFRHQRIH, YGCQECGKSFSQSAALTKHQRTH, YTCLKCGERFRQNSHLNRHQSTH, FKCEECGETCHISNLFRHQRLH, YKCEECEKSFKQRSDLFKHHRIH, YGCSVCGKRFNQSATLIKHQRIH, and YKCLECGERFRQSTHLIRHQRIH. A Glycyl lysine isopeptide (Lys-Gly) (interchain with G-Cter in SUMO2) cross-link involves residue K443.

This sequence belongs to the krueppel C2H2-type zinc-finger protein family.

Its subcellular location is the nucleus. Functionally, may be involved in transcriptional regulation. This is Zinc finger protein 394 (ZNF394) from Homo sapiens (Human).